Consider the following 522-residue polypeptide: MAFLDNPTIILAHIRQSHVTSDDTGMCEMVLIDHDVDLEKTHPPSVPGDSGSEVQGSSGETQGYIYAQSVDITSSWDFGIRRRSNTAQRLERLRKERQNQIKCKNIQWKERNSKQSAQELKSLFEKKSLKEKPPSSGKQSILSVRLEQCPLQLNNPFNEYSKFDGKGHVGTTATKKIDVYLPLHSSQDRLLPMTVVTMASARVQDLIGLICWQYTSEGREPKLNDNVSAYCLHIAEDDGEVDTDFPPLDSNEPIHKFGFSTLALVEKYSSPGLTSKESLFVRINAAHGFSLIQVDNTKVTMKEILLKAVKRRKGSQKISGPQYRLEKQSEPNIAVDLESTLESQNAWEFCLVRENSSRADGVFEEDSQIDIATVQDMLSSHHYKSFKVSMIHRLRFTTDVQLGISGDKVEIDPVTNQKASTKFWIKQKPISIDCDLLCACDLAEEKSPSHAVFKLTYLSSHDYKHLYFESDAATVSEIVLKVNYILESRASTARADYLAQKQRKLNRRTSFSFQKEKKSGQQ.

A2 is subject to N-acetylalanine. The tract at residues 2–184 is interaction with MAP3K2; the sequence is AFLDNPTIIL…KKIDVYLPLH (183 aa). Positions 2–267 are interaction with NBN; that stretch reads AFLDNPTIIL…GFSTLALVEK (266 aa). A disordered region spans residues 38–59; sequence LEKTHPPSVPGDSGSEVQGSSG. T86 is subject to Phosphothreonine; by PKB/AKT1 and RPS6KB1. S128 is modified (phosphoserine; by PKC). The CRIM domain occupies 139–267; that stretch reads QSILSVRLEQ…GFSTLALVEK (129 aa). S186, S315, and S356 each carry phosphoserine. The SIN1-type RBD stretch occupies residues 279–353; that stretch reads LFVRINAAHG…QNAWEFCLVR (75 aa). Residues 382 to 487 enclose the SIN1-type PH domain; the sequence is HYKSFKVSMI…IVLKVNYILE (106 aa). R393 is a binding site for a 1,2-diacyl-sn-glycero-3-phospho-(1D-myo-inositol-3,4,5-trisphosphate). At T398 the chain carries Phosphothreonine; by RPS6KB1. Positions 428 and 464 each coordinate a 1,2-diacyl-sn-glycero-3-phospho-(1D-myo-inositol-3,4,5-trisphosphate). An interaction with ATF2 region spans residues 468–522; the sequence is FESDAATVSEIVLKVNYILESRASTARADYLAQKQRKLNRRTSFSFQKEKKSGQQ. S510 bears the Phosphoserine mark.

This sequence belongs to the SIN1 family. As to quaternary structure, component of the mechanistic target of rapamycin complex 2 (mTORC2), consisting in two heterotretramers composed of MTOR, MLST8, RICTOR and MAPKAP1/SIN1. The mTORC2 core complex associates with PRR5/PROTOR1 and/or PRR5L/PROTOR2. Contrary to mTORC1, mTORC2 does not bind to and is not sensitive to FKBP12-rapamycin. Interacts with MAP3K2. Interacts with ATF2. Interacts with MAPK8. Interacts with GTP-bound HRAS and KRAS; inhibiting their activity. Interacts with IFNAR2. Phosphorylation at Ser-128 by PKC promotes relocalization to the perinuclear region, where the mTORC2 complex specifically mediates phosphorylation of SGK1. Phosphorylated at Thr-86 by AKT1 or RPS6KB1 in the presence of growth factors; the effect of this phosphorylation is however unclear. According to two studies, phosphorylation at Thr-86 by AKT1 is part of a positive feedback loop that increases mTORC2 activation. According to another study, phosphorylation at Thr-86 and Thr-398 by RPS6KB1 promotes dissociation from the mTORC2 complex, leading to inhibit mTORC2 signaling. As to expression, uniquitously expressed, with highest levels in testis, kidney and liver. Present in renal tubule cells (at protein level).

Its subcellular location is the cell membrane. The protein resides in the endoplasmic reticulum membrane. It is found in the early endosome membrane. The protein localises to the late endosome membrane. It localises to the lysosome membrane. Its subcellular location is the golgi apparatus membrane. The protein resides in the mitochondrion outer membrane. It is found in the cytoplasm. The protein localises to the perinuclear region. It localises to the nucleus. With respect to regulation, phosphatidylinositol 3,4,5-trisphosphate (PI(3,4,5)P3) promotes MTOR activation by relieving MAPKAP1/SIN1-mediated inhibition of MTOR that takes place in absence of PI(3,4,5)P3. Functionally, component of the mechanistic target of rapamycin complex 2 (mTORC2), which transduces signals from growth factors to pathways involved in proliferation, cytoskeletal organization, lipogenesis and anabolic output. In response to growth factors, mTORC2 phosphorylates and activates AGC protein kinase family members, including AKT (AKT1, AKT2 and AKT3), PKC (PRKCA, PRKCB and PRKCE) and SGK1. In contrast to mTORC1, mTORC2 is nutrient-insensitive. Within the mTORC2 complex, MAPKAP1/SIN1 acts as a substrate adapter which recognizes and binds AGC protein kinase family members for phosphorylation by MTOR. mTORC2 plays a critical role in AKT1 activation by mediating phosphorylation of different sites depending on the context, such as 'Thr-450', 'Ser-473', 'Ser-477' or 'Thr-479', facilitating the phosphorylation of the activation loop of AKT1 on 'Thr-308' by PDPK1/PDK1 which is a prerequisite for full activation. mTORC2 catalyzes the phosphorylation of SGK1 at 'Ser-422' and of PRKCA on 'Ser-657'. The mTORC2 complex also phosphorylates various proteins involved in insulin signaling, such as FBXW8 and IGF2BP1. mTORC2 acts upstream of Rho GTPases to regulate the actin cytoskeleton, probably by activating one or more Rho-type guanine nucleotide exchange factors. mTORC2 promotes the serum-induced formation of stress-fibers or F-actin. MAPKAP1 inhibits MAP3K2 by preventing its dimerization and autophosphorylation. Inhibits HRAS and KRAS independently of mTORC2 complex. Enhances osmotic stress-induced phosphorylation of ATF2 and ATF2-mediated transcription. Involved in ciliogenesis, regulates cilia length through its interaction with CCDC28B independently of mTORC2 complex. The polypeptide is Target of rapamycin complex 2 subunit MAPKAP1 (Mus musculus (Mouse)).